The primary structure comprises 95 residues: MTKSELIESLAGKYPHLSPRDIEHAIKEMIGCMSEALAGGERIEIRGFGSFSLHHRPPRVGRNPKTGESVHLPSRRVPHFKPGKELRDRVNSIKD.

The interval 52–95 (SLHHRPPRVGRNPKTGESVHLPSRRVPHFKPGKELRDRVNSIKD) is disordered. A compositionally biased stretch (basic and acidic residues) spans 82 to 95 (PGKELRDRVNSIKD).

It belongs to the bacterial histone-like protein family. Heterodimer of an alpha and a beta chain.

Functionally, this protein is one of the two subunits of integration host factor, a specific DNA-binding protein that functions in genetic recombination as well as in transcriptional and translational control. The polypeptide is Integration host factor subunit beta (Methylococcus capsulatus (strain ATCC 33009 / NCIMB 11132 / Bath)).